Consider the following 748-residue polypeptide: Formate acetyltransferase (748 aa).

In terms of domain architecture, PFL spans 5 to 618 (NNHTNAWQGF…KTGNTPDGRK (614 aa)). Cysteine 412 acts as the S-acetylcysteine intermediate in catalysis. Cysteine 413 serves as the catalytic Cysteine radical intermediate. The region spanning 625–748 (PGANPMHGRD…VISRTFHESM (124 aa)) is the Glycine radical domain. A Glycine radical modification is found at glycine 723.

The protein belongs to the glycyl radical enzyme (GRE) family. PFL subfamily. In terms of assembly, homodimer.

The protein localises to the cytoplasm. The enzyme catalyses formate + acetyl-CoA = pyruvate + CoA. Its pathway is fermentation; pyruvate fermentation; formate from pyruvate: step 1/1. In terms of biological role, catalyzes the conversion of pyruvate to formate and acetyl-CoA. The protein is Formate acetyltransferase (pflB) of Staphylococcus epidermidis (strain ATCC 35984 / DSM 28319 / BCRC 17069 / CCUG 31568 / BM 3577 / RP62A).